The sequence spans 161 residues: 6,7-dimethyl-8-ribityllumazine synthase (161 aa).

Residues W31, T65–E67, and C89–V91 each bind 5-amino-6-(D-ribitylamino)uracil. Residue D94–T95 coordinates (2S)-2-hydroxy-3-oxobutyl phosphate. The active-site Proton donor is the H97. F122 is a 5-amino-6-(D-ribitylamino)uracil binding site. Position 136 (R136) interacts with (2S)-2-hydroxy-3-oxobutyl phosphate.

This sequence belongs to the DMRL synthase family.

The enzyme catalyses (2S)-2-hydroxy-3-oxobutyl phosphate + 5-amino-6-(D-ribitylamino)uracil = 6,7-dimethyl-8-(1-D-ribityl)lumazine + phosphate + 2 H2O + H(+). Its pathway is cofactor biosynthesis; riboflavin biosynthesis; riboflavin from 2-hydroxy-3-oxobutyl phosphate and 5-amino-6-(D-ribitylamino)uracil: step 1/2. Its function is as follows. Catalyzes the formation of 6,7-dimethyl-8-ribityllumazine by condensation of 5-amino-6-(D-ribitylamino)uracil with 3,4-dihydroxy-2-butanone 4-phosphate. This is the penultimate step in the biosynthesis of riboflavin. This Porphyromonas gingivalis (strain ATCC 33277 / DSM 20709 / CIP 103683 / JCM 12257 / NCTC 11834 / 2561) protein is 6,7-dimethyl-8-ribityllumazine synthase.